A 1575-amino-acid polypeptide reads, in one-letter code: Ras GTPase-activating-like protein IQGAP2 (1575 aa).

Serine 16 bears the Phosphoserine mark. The Calponin-homology (CH) domain occupies 41–156 (LCHLEEAKRW…YCIHALSLYL (116 aa)). At threonine 356 the chain carries Phosphothreonine. Residues 594-627 (ESSEGSWVTLNVQEKYNYYYNTDSKEGSWVPPEL) enclose the WW domain. Residues serine 595 and serine 599 each carry the phosphoserine modification. 3 consecutive IQ domains span residues 690-719 (QTES…VFAG), 720-749 (NVDS…YFED), and 750-779 (HKNE…SENP). Phosphothreonine is present on residues threonine 782, threonine 881, threonine 1002, and threonine 1269. In terms of domain architecture, Ras-GAP spans 933 to 1182 (YLLLKLFKTA…QEFRKYFQEA (250 aa)). Serine 1279 and serine 1461 each carry phosphoserine.

Functionally, binds to activated CDC42 and RAC1 but does not seem to stimulate their GTPase activity. Associates with calmodulin. This is Ras GTPase-activating-like protein IQGAP2 (Iqgap2) from Mus musculus (Mouse).